Reading from the N-terminus, the 108-residue chain is MLGKKLHVKKNDTVVVIAGKDRSKSGKVISIHPKKDGVIVEGVNVVKRHQKPRGSEQGGILEKEAPVHISNVMLLCGKCNKPVRTKTTVLEDGKKARCCVKCGESFDK.

It belongs to the universal ribosomal protein uL24 family. In terms of assembly, part of the 50S ribosomal subunit.

In terms of biological role, one of two assembly initiator proteins, it binds directly to the 5'-end of the 23S rRNA, where it nucleates assembly of the 50S subunit. One of the proteins that surrounds the polypeptide exit tunnel on the outside of the subunit. The polypeptide is Large ribosomal subunit protein uL24 (Citrifermentans bemidjiense (strain ATCC BAA-1014 / DSM 16622 / JCM 12645 / Bem) (Geobacter bemidjiensis)).